The chain runs to 801 residues: Elongation factor G, mitochondrial (801 aa).

A mitochondrion-targeting transit peptide spans 1–65; it reads MRVQSLLRAQ…QKIQNQRRWQ (65 aa). One can recognise a tr-type G domain in the interval 100–387; the sequence is SRVRNIGIAA…AVCDYLPNPS (288 aa). GTP contacts are provided by residues 109–116, 185–189, and 239–242; these read AHIDSGKT, DTPGH, and NKMD.

Belongs to the TRAFAC class translation factor GTPase superfamily. Classic translation factor GTPase family. EF-G/EF-2 subfamily.

It is found in the mitochondrion. The protein operates within protein biosynthesis; polypeptide chain elongation. Mitochondrial GTPase that catalyzes the GTP-dependent ribosomal translocation step during translation elongation. During this step, the ribosome changes from the pre-translocational (PRE) to the post-translocational (POST) state as the newly formed A-site-bound peptidyl-tRNA and P-site-bound deacylated tRNA move to the P and E sites, respectively. Catalyzes the coordinated movement of the two tRNA molecules, the mRNA and conformational changes in the ribosome. The chain is Elongation factor G, mitochondrial (mef1) from Pyrenophora tritici-repentis (strain Pt-1C-BFP) (Wheat tan spot fungus).